Here is a 36-residue protein sequence, read N- to C-terminus: Conotoxin Cl14.10 (36 aa).

The propeptide occupies 1 to 2; sequence NE.

In terms of processing, contains 2 disulfide bond. Expressed by the venom duct.

It localises to the secreted. The sequence is that of Conotoxin Cl14.10 from Californiconus californicus (California cone).